The primary structure comprises 435 residues: Methylenetetrahydrofolate--tRNA-(uracil-5-)-methyltransferase TrmFO (435 aa).

Position 9-14 (9-14) interacts with FAD; it reads GAGLAG.

It belongs to the MnmG family. TrmFO subfamily. The cofactor is FAD.

The protein resides in the cytoplasm. It carries out the reaction uridine(54) in tRNA + (6R)-5,10-methylene-5,6,7,8-tetrahydrofolate + NADH + H(+) = 5-methyluridine(54) in tRNA + (6S)-5,6,7,8-tetrahydrofolate + NAD(+). The enzyme catalyses uridine(54) in tRNA + (6R)-5,10-methylene-5,6,7,8-tetrahydrofolate + NADPH + H(+) = 5-methyluridine(54) in tRNA + (6S)-5,6,7,8-tetrahydrofolate + NADP(+). Catalyzes the folate-dependent formation of 5-methyl-uridine at position 54 (M-5-U54) in all tRNAs. In Staphylococcus aureus (strain MRSA252), this protein is Methylenetetrahydrofolate--tRNA-(uracil-5-)-methyltransferase TrmFO.